Consider the following 337-residue polypeptide: Protein RecA (337 aa).

66-73 (GPESSGKT) is an ATP binding site.

Belongs to the RecA family.

The protein localises to the cytoplasm. Can catalyze the hydrolysis of ATP in the presence of single-stranded DNA, the ATP-dependent uptake of single-stranded DNA by duplex DNA, and the ATP-dependent hybridization of homologous single-stranded DNAs. It interacts with LexA causing its activation and leading to its autocatalytic cleavage. In Mesomycoplasma hyopneumoniae (strain J / ATCC 25934 / NCTC 10110) (Mycoplasma hyopneumoniae), this protein is Protein RecA.